The chain runs to 105 residues: Ferredoxin-2 (105 aa).

Residues 4-94 (YQVEVIYQGQ…DLKIETHKED (91 aa)) form the 2Fe-2S ferredoxin-type domain. The [2Fe-2S] cluster site is built by cysteine 40, cysteine 45, cysteine 48, and cysteine 78.

This sequence belongs to the 2Fe2S plant-type ferredoxin family. As to quaternary structure, forms a complex with heterodimeric ferredoxin-thioredoxin reductase (FTR) and thioredoxin. [2Fe-2S] cluster serves as cofactor.

Functionally, ferredoxins are iron-sulfur proteins that transfer electrons in a wide variety of metabolic reactions. In Synechococcus sp. (strain ATCC 27144 / PCC 6301 / SAUG 1402/1) (Anacystis nidulans), this protein is Ferredoxin-2 (petF2).